Here is a 267-residue protein sequence, read N- to C-terminus: Myeloid leukemia factor 1 (267 aa).

Phosphoserine occurs at positions 6, 8, 32, and 34. Residues 39–67 (RDLLSISDGRGRTHNRRERDDGEDSLTHA) are disordered. Residues 50 to 125 (RTHNRRERDD…VGDEPPKVFQ (76 aa)) are interaction with COPS3.

This sequence belongs to the MLF family. Interacts with CENPU. Also interacts with NRBP1/MADM, YWHAZ/14-3-3-zeta and HNRPUL2/MANP. NRBP1 recruits a serine kinase which phosphorylates both itself and MLF1. Phosphorylated MLF1 then binds to YWHAZ and is retained in the cytoplasm. Retained in the nucleus by binding to HNRPUL2. Binds to COPS3/CSN3 which is required for suppression of COP1 and activation of p53. Post-translationally, phosphorylation is required for binding to YWHAZ. As to expression, highly expressed in skeletal muscle, heart, testis. Also found in lung, but not in spleen, thymus, bone marrow, liver and kidney.

Its subcellular location is the cytoplasm. It is found in the nucleus. The protein localises to the cell projection. The protein resides in the cilium. It localises to the cytoskeleton. Its subcellular location is the cilium basal body. Its function is as follows. Involved in lineage commitment of primary hemopoietic progenitors by restricting erythroid formation and enhancing myeloid formation. Interferes with erythropoietin-induced erythroid terminal differentiation by preventing cells from exiting the cell cycle through suppression of CDKN1B/p27Kip1 levels. Suppresses COP1 activity via CSN3 which activates p53 and induces cell cycle arrest. Binds DNA and affects the expression of a number of genes so may function as a transcription factor in the nucleus. The protein is Myeloid leukemia factor 1 (Mlf1) of Mus musculus (Mouse).